The primary structure comprises 146 residues: D-aminoacyl-tRNA deacylase (146 aa).

A Gly-cisPro motif, important for rejection of L-amino acids motif is present at residues Gly137–Pro138.

Belongs to the DTD family. In terms of assembly, homodimer.

It is found in the cytoplasm. The catalysed reaction is glycyl-tRNA(Ala) + H2O = tRNA(Ala) + glycine + H(+). The enzyme catalyses a D-aminoacyl-tRNA + H2O = a tRNA + a D-alpha-amino acid + H(+). In terms of biological role, an aminoacyl-tRNA editing enzyme that deacylates mischarged D-aminoacyl-tRNAs. Also deacylates mischarged glycyl-tRNA(Ala), protecting cells against glycine mischarging by AlaRS. Acts via tRNA-based rather than protein-based catalysis; rejects L-amino acids rather than detecting D-amino acids in the active site. By recycling D-aminoacyl-tRNA to D-amino acids and free tRNA molecules, this enzyme counteracts the toxicity associated with the formation of D-aminoacyl-tRNA entities in vivo and helps enforce protein L-homochirality. This Acinetobacter baylyi (strain ATCC 33305 / BD413 / ADP1) protein is D-aminoacyl-tRNA deacylase.